The chain runs to 155 residues: 6,7-dimethyl-8-ribityllumazine synthase (155 aa).

5-amino-6-(D-ribitylamino)uracil is bound by residues Tyr23, Ala57–Glu59, and Cys81–Ile83. (2S)-2-hydroxy-3-oxobutyl phosphate is bound at residue Glu86 to Thr87. Catalysis depends on His89, which acts as the Proton donor. Residue Phe114 participates in 5-amino-6-(D-ribitylamino)uracil binding. Arg128 serves as a coordination point for (2S)-2-hydroxy-3-oxobutyl phosphate.

The protein belongs to the DMRL synthase family.

It catalyses the reaction (2S)-2-hydroxy-3-oxobutyl phosphate + 5-amino-6-(D-ribitylamino)uracil = 6,7-dimethyl-8-(1-D-ribityl)lumazine + phosphate + 2 H2O + H(+). Its pathway is cofactor biosynthesis; riboflavin biosynthesis; riboflavin from 2-hydroxy-3-oxobutyl phosphate and 5-amino-6-(D-ribitylamino)uracil: step 1/2. In terms of biological role, catalyzes the formation of 6,7-dimethyl-8-ribityllumazine by condensation of 5-amino-6-(D-ribitylamino)uracil with 3,4-dihydroxy-2-butanone 4-phosphate. This is the penultimate step in the biosynthesis of riboflavin. The sequence is that of 6,7-dimethyl-8-ribityllumazine synthase from Rhodopirellula baltica (strain DSM 10527 / NCIMB 13988 / SH1).